Here is a 224-residue protein sequence, read N- to C-terminus: Cytochrome c oxidase subunit 2 (224 aa).

At 1-26 the chain is on the mitochondrial intermembrane side; that stretch reads MSTWGQMNLMDPASPIQIEMMLFHDH. A helical transmembrane segment spans residues 27 to 48; it reads AMAILIGIFTLVSCLGVKLCFN. The Mitochondrial matrix segment spans residues 49 to 62; sequence TLSTRTMHEAQLLE. Residues 63 to 82 traverse the membrane as a helical segment; it reads TLWTILPAFLLVWLALPSLR. Residues 83 to 224 are Mitochondrial intermembrane-facing; sequence LLYLLDEQSS…DVKDFINMCN (142 aa). Residues His-161, Cys-196, Glu-198, Cys-200, His-204, and Met-207 each contribute to the Cu cation site. Glu-198 contacts Mg(2+).

This sequence belongs to the cytochrome c oxidase subunit 2 family. In terms of assembly, component of the cytochrome c oxidase (complex IV, CIV), a multisubunit enzyme composed of a catalytic core of 3 subunits and several supernumerary subunits. The complex exists as a monomer or a dimer and forms supercomplexes (SCs) in the inner mitochondrial membrane with ubiquinol-cytochrome c oxidoreductase (cytochrome b-c1 complex, complex III, CIII). The cofactor is Cu cation.

It localises to the mitochondrion inner membrane. The enzyme catalyses 4 Fe(II)-[cytochrome c] + O2 + 8 H(+)(in) = 4 Fe(III)-[cytochrome c] + 2 H2O + 4 H(+)(out). Component of the cytochrome c oxidase, the last enzyme in the mitochondrial electron transport chain which drives oxidative phosphorylation. The respiratory chain contains 3 multisubunit complexes succinate dehydrogenase (complex II, CII), ubiquinol-cytochrome c oxidoreductase (cytochrome b-c1 complex, complex III, CIII) and cytochrome c oxidase (complex IV, CIV), that cooperate to transfer electrons derived from NADH and succinate to molecular oxygen, creating an electrochemical gradient over the inner membrane that drives transmembrane transport and the ATP synthase. Cytochrome c oxidase is the component of the respiratory chain that catalyzes the reduction of oxygen to water. Electrons originating from reduced cytochrome c in the intermembrane space (IMS) are transferred via the dinuclear copper A center (CU(A)) of subunit 2 and heme A of subunit 1 to the active site in subunit 1, a binuclear center (BNC) formed by heme A3 and copper B (CU(B)). The BNC reduces molecular oxygen to 2 water molecules using 4 electrons from cytochrome c in the IMS and 4 protons from the mitochondrial matrix. The protein is Cytochrome c oxidase subunit 2 (COII) of Albinaria turrita (Door snail).